The primary structure comprises 426 residues: Probable imidazolonepropionase (426 aa).

The 4-imidazolone-5-propanoate site is built by Y159 and H192. Y159 contacts N-formimidoyl-L-glutamate. Residue H260 participates in Fe(3+) binding. Position 260 (H260) interacts with Zn(2+). E263 serves as a coordination point for 4-imidazolone-5-propanoate. D334 contributes to the Fe(3+) binding site. D334 contacts Zn(2+). N336 contacts N-formimidoyl-L-glutamate.

The protein belongs to the metallo-dependent hydrolases superfamily. HutI family. It depends on Zn(2+) as a cofactor. The cofactor is Fe(3+).

The catalysed reaction is 4-imidazolone-5-propanoate + H2O = N-formimidoyl-L-glutamate. Its pathway is amino-acid degradation; L-histidine degradation into L-glutamate; N-formimidoyl-L-glutamate from L-histidine: step 3/3. This is Probable imidazolonepropionase (AMDHD1) from Bos taurus (Bovine).